A 263-amino-acid chain; its full sequence is tRNA pseudouridine synthase A (263 aa).

The active-site Nucleophile is aspartate 53. Tyrosine 111 serves as a coordination point for substrate. The interval 232–263 is disordered; sequence TAPGHGLISGRSNMTNGKLENNKTTNPCVTKY. Polar residues predominate over residues 241–263; that stretch reads GRSNMTNGKLENNKTTNPCVTKY.

This sequence belongs to the tRNA pseudouridine synthase TruA family. In terms of assembly, homodimer.

It carries out the reaction uridine(38/39/40) in tRNA = pseudouridine(38/39/40) in tRNA. Its function is as follows. Formation of pseudouridine at positions 38, 39 and 40 in the anticodon stem and loop of transfer RNAs. The protein is tRNA pseudouridine synthase A of Halalkalibacterium halodurans (strain ATCC BAA-125 / DSM 18197 / FERM 7344 / JCM 9153 / C-125) (Bacillus halodurans).